Reading from the N-terminus, the 81-residue chain is AVITGACERDLQCGKGTCCAVSLWIKSVRVCTPVGTSGEDCHPASHKIPFSGQRMHHTCPCAPNLACVQTSPKKFKCLSKS.

5 cysteine pairs are disulfide-bonded: Cys-7/Cys-19, Cys-13/Cys-31, Cys-18/Cys-59, Cys-41/Cys-67, and Cys-61/Cys-77.

It belongs to the AVIT (prokineticin) family. Expressed by the venom gland.

The protein resides in the secreted. In terms of biological role, potent agonist for both PKR1/PROKR1 and PKR2/PROKR2. Potently contracts gastrointestinal (GI) smooth muscle. This chain is Toxin MIT1, found in Dendroaspis polylepis polylepis (Black mamba).